We begin with the raw amino-acid sequence, 603 residues long: Trihelix transcription factor DF1 (603 aa).

The 59-residue stretch at 60–118 (NRWPRQETLALLKIRSDMGIAFRDASVKGPLWEEVSRKMAEHGYIRNAKKCKEKFENVY) folds into the Myb-like 1 domain. 4 disordered regions span residues 149–201 (QSTT…SSIP), 220–249 (LSDNSTSSSSSYSTSSDMEMGGGTATTRKK), 333–408 (KQPN…SSSR), and 532–603 (QWPP…TNNL). Composition is skewed to low complexity over residues 168–178 (NNNNNNNNNNN), 189–198 (TTVMPTLPSS), 221–236 (SDNSTSSSSSYSTSSD), and 344–362 (PQQVRPSMQLNNNNQQQPP). Pro residues predominate over residues 363 to 376 (QRSPPPQPPAPLPQ). Residues 381 to 408 (VVSTLDTTKTDNGGDQNMTPAASASSSR) are compositionally biased toward polar residues. One can recognise a Myb-like 2 domain in the interval 401-465 (AASASSSRWP…RCKEKWENIN (65 aa)). Residues 532 to 555 (QWPPAVTTATTTPAAAQPDQQSQP) show a composition bias toward low complexity. Positions 559 to 586 (NFDDEEGTDEEYDDEDEEEENEEEEGGE) are enriched in acidic residues. Residues 593 to 603 (NNNNNKTTNNL) show a composition bias toward low complexity.

The protein localises to the nucleus. Transcription repressor that negatively regulates root hair growth by directly binding RSL4 promoter and repressing RSL4 expression. Required for the synthesis of seed coat mucilage. The polypeptide is Trihelix transcription factor DF1 (Arabidopsis thaliana (Mouse-ear cress)).